The chain runs to 362 residues: Endolytic peptidoglycan transglycosylase RlpA (362 aa).

A signal peptide spans 1-17 (MRKQWLGICIAAGMLAA). A lipid anchor (N-palmitoyl cysteine) is attached at C18. C18 carries S-diacylglycerol cysteine lipidation. A disordered region spans residues 198–276 (PDLSGGAGTS…PSTTPATSPA (79 aa)). A compositionally biased stretch (low complexity) spans 262–276 (PVVTAPSTTPATSPA). In terms of domain architecture, SPOR spans 285–361 (QSASGNFMVQ…AQLQSFITTA (77 aa)).

The protein belongs to the RlpA family.

It is found in the cell membrane. Its function is as follows. Lytic transglycosylase with a strong preference for naked glycan strands that lack stem peptides. The polypeptide is Endolytic peptidoglycan transglycosylase RlpA (Escherichia coli (strain K12)).